We begin with the raw amino-acid sequence, 481 residues long: Glutamate--tRNA ligase (481 aa).

Positions 28–38 match the 'HIGH' region motif; it reads PSPTGFLHLGG. Residues 139 to 148 show a composition bias toward basic and acidic residues; it reads RYDGTWRPEP. Positions 139 to 159 are disordered; that stretch reads RYDGTWRPEPGKTLPPVPADR. The 'KMSKS' region motif lies at 260-264; sequence KLSKR. ATP is bound at residue Lys263.

The protein belongs to the class-I aminoacyl-tRNA synthetase family. Glutamate--tRNA ligase type 1 subfamily. As to quaternary structure, monomer.

It is found in the cytoplasm. The enzyme catalyses tRNA(Glu) + L-glutamate + ATP = L-glutamyl-tRNA(Glu) + AMP + diphosphate. Functionally, catalyzes the attachment of glutamate to tRNA(Glu) in a two-step reaction: glutamate is first activated by ATP to form Glu-AMP and then transferred to the acceptor end of tRNA(Glu). The sequence is that of Glutamate--tRNA ligase from Bordetella bronchiseptica (strain ATCC BAA-588 / NCTC 13252 / RB50) (Alcaligenes bronchisepticus).